The chain runs to 104 residues: MIRKAFVMQVNADAHEEYQRRHNPIWPELESVLKAHGAHHYAIYLDKERNLLFATVEIESEERWNAIASTDVCQRWWKHMRDVMPANPDNSPVSAELKEVFYLA.

Tyr-18 provides a ligand contact to substrate. His-22 acts as the Proton donor in catalysis. Residues Tyr-41 and 76-77 (WW) contribute to the substrate site.

Belongs to the rhamnose mutarotase family. As to quaternary structure, homodimer.

The protein resides in the cytoplasm. It catalyses the reaction alpha-L-rhamnose = beta-L-rhamnose. It participates in carbohydrate metabolism; L-rhamnose metabolism. Its function is as follows. Involved in the anomeric conversion of L-rhamnose. This chain is L-rhamnose mutarotase, found in Citrobacter koseri (strain ATCC BAA-895 / CDC 4225-83 / SGSC4696).